The primary structure comprises 302 residues: Mediator of RNA polymerase II transcription subunit 6 (302 aa).

Residues 260–281 are disordered; sequence ATGQTGATSRFENGSSRSSTDA.

Belongs to the Mediator complex subunit 6 family. As to quaternary structure, component of the Mediator complex.

It is found in the nucleus. Functionally, component of the Mediator complex, a coactivator involved in the regulated transcription of nearly all RNA polymerase II-dependent genes. Mediator functions as a bridge to convey information from gene-specific regulatory proteins to the basal RNA polymerase II transcription machinery. Mediator is recruited to promoters by direct interactions with regulatory proteins and serves as a scaffold for the assembly of a functional preinitiation complex with RNA polymerase II and the general transcription factors. The chain is Mediator of RNA polymerase II transcription subunit 6 (MED6) from Candida glabrata (strain ATCC 2001 / BCRC 20586 / JCM 3761 / NBRC 0622 / NRRL Y-65 / CBS 138) (Yeast).